The chain runs to 231 residues: LexA repressor (231 aa).

The segment at residues 26–46 (FDEMKDALDLRSKSGIHRLIT) is a DNA-binding region (H-T-H motif). Residues Ser152 and Lys190 each act as for autocatalytic cleavage activity in the active site.

Belongs to the peptidase S24 family. As to quaternary structure, homodimer.

It catalyses the reaction Hydrolysis of Ala-|-Gly bond in repressor LexA.. Functionally, represses a number of genes involved in the response to DNA damage (SOS response), including recA and lexA. In the presence of single-stranded DNA, RecA interacts with LexA causing an autocatalytic cleavage which disrupts the DNA-binding part of LexA, leading to derepression of the SOS regulon and eventually DNA repair. In Dinoroseobacter shibae (strain DSM 16493 / NCIMB 14021 / DFL 12), this protein is LexA repressor.